The chain runs to 309 residues: Glutaminase (309 aa).

Substrate contacts are provided by serine 64, asparagine 114, glutamate 160, asparagine 167, tyrosine 191, tyrosine 243, and valine 261.

It belongs to the glutaminase family. In terms of assembly, homotetramer.

The catalysed reaction is L-glutamine + H2O = L-glutamate + NH4(+). This chain is Glutaminase, found in Methylobacterium nodulans (strain LMG 21967 / CNCM I-2342 / ORS 2060).